Here is a 444-residue protein sequence, read N- to C-terminus: Transposase for insertion sequence element IS1557 (444 aa).

Residues 273–292 (PKWGRGRPGKNAAPRPGRER) are disordered.

This sequence belongs to the transposase 12 family.

In Mycobacterium tuberculosis (strain CDC 1551 / Oshkosh), this protein is Transposase for insertion sequence element IS1557.